Here is a 137-residue protein sequence, read N- to C-terminus: Glutamate mutase sigma subunit (137 aa).

In terms of domain architecture, B12-binding spans 3 to 137 (KKTIVLGVIG…ADLKKDLNIE (135 aa)). Adenosylcob(III)alamin-binding positions include 13 to 17 (SDCHA), His16, 61 to 63 (SSL), and 93 to 97 (NIVVG).

It belongs to the methylaspartate mutase GlmS subunit family. Heterotetramer composed of 2 epsilon subunits (GlmE) and 2 sigma subunits (GlmS). GlmE exists as a homodimer and GlmS as a monomer. Adenosylcob(III)alamin is required as a cofactor.

The enzyme catalyses (2S,3S)-3-methyl-L-aspartate = L-glutamate. It participates in amino-acid degradation; L-glutamate degradation via mesaconate pathway; acetate and pyruvate from L-glutamate: step 1/4. Competitively inhibited by (2S,4S)-4-fluoroglutamate, 2-methyleneglutarate, (2R,3RS)-3-fluoroglutamate and (S)-3-methylitaconate. Functionally, catalyzes the carbon skeleton rearrangement of L-glutamate to L-threo-3-methylaspartate ((2S,3S)-3-methylaspartate). The protein is Glutamate mutase sigma subunit of Clostridium cochlearium.